Reading from the N-terminus, the 554-residue chain is Dihydroxy-acid dehydratase (554 aa).

Aspartate 78 contacts Mg(2+). Cysteine 119 is a [2Fe-2S] cluster binding site. 2 residues coordinate Mg(2+): aspartate 120 and lysine 121. The residue at position 121 (lysine 121) is an N6-carboxylysine. Cysteine 191 lines the [2Fe-2S] cluster pocket. Glutamate 442 serves as a coordination point for Mg(2+). Residue serine 468 is the Proton acceptor of the active site.

Belongs to the IlvD/Edd family. As to quaternary structure, homodimer. [2Fe-2S] cluster serves as cofactor. Mg(2+) is required as a cofactor.

The enzyme catalyses (2R)-2,3-dihydroxy-3-methylbutanoate = 3-methyl-2-oxobutanoate + H2O. The catalysed reaction is (2R,3R)-2,3-dihydroxy-3-methylpentanoate = (S)-3-methyl-2-oxopentanoate + H2O. It functions in the pathway amino-acid biosynthesis; L-isoleucine biosynthesis; L-isoleucine from 2-oxobutanoate: step 3/4. Its pathway is amino-acid biosynthesis; L-valine biosynthesis; L-valine from pyruvate: step 3/4. In terms of biological role, functions in the biosynthesis of branched-chain amino acids. Catalyzes the dehydration of (2R,3R)-2,3-dihydroxy-3-methylpentanoate (2,3-dihydroxy-3-methylvalerate) into 2-oxo-3-methylpentanoate (2-oxo-3-methylvalerate) and of (2R)-2,3-dihydroxy-3-methylbutanoate (2,3-dihydroxyisovalerate) into 2-oxo-3-methylbutanoate (2-oxoisovalerate), the penultimate precursor to L-isoleucine and L-valine, respectively. The polypeptide is Dihydroxy-acid dehydratase (Thermotoga petrophila (strain ATCC BAA-488 / DSM 13995 / JCM 10881 / RKU-1)).